Reading from the N-terminus, the 541-residue chain is Cyclin-T1-4 (541 aa).

The disordered stretch occupies residues 277 to 366; sequence VSEVESSVGG…KSRSGVEAPG (90 aa). Polar residues predominate over residues 307-325; that stretch reads SDNLGGSTKATQNRSNDNG. Residues 336–354 are compositionally biased toward basic and acidic residues; sequence QKGERDTETKDSMHTESHP. Serine 396 is subject to Phosphoserine. Residues 445 to 541 are disordered; it reads EDDKDIQNKS…REPRRHSQER (97 aa). Over residues 493 to 511 the composition is skewed to basic and acidic residues; it reads MESPCEKQLGEGKRRHDNS. Residues 519 to 528 show a composition bias toward polar residues; that stretch reads KTNPGGSSHS. Residues 529 to 541 show a composition bias toward basic and acidic residues; it reads YGDREPRRHSQER.

Belongs to the cyclin family. Cyclin T subfamily.

The sequence is that of Cyclin-T1-4 (CYCT1-4) from Arabidopsis thaliana (Mouse-ear cress).